The sequence spans 252 residues: Type IV pilus assembly protein PilF (252 aa).

The N-terminal stretch at 1–17 (MTVRAALVFLLAVGLTG) is a signal peptide. Residue C18 is the site of N-palmitoyl cysteine attachment. C18 is lipidated: S-diacylglycerol cysteine. TPR repeat units follow at residues 32-67 (GRDEARDAYIQLGLGYLQRGNTEQAKVPLRKALEID), 84-101 (EMEPKLADEEYRKALASD), 104-133 (NARVLNNYGGFLYEQKRYEEAYQRLLEASQ), 139-171 (ERSRVFENLGLVSLQMKKPAQAKEYFEKSLRLN), 174-203 (QPSVALEMADLLYKEREYVPARQYYDLFAQ), and 208-235 (NARSLLLGIRLAKVFEDRDTAASYGLQL).

Interacts with PilQ; this interaction is essential for assemby of PilQ into secretins.

The protein resides in the cell outer membrane. Essential component of the type IV pilus (T4P) that plays a role in surface and host cell adhesion, colonization, biofilm maturation, virulence, and twitching, a form of surface-associated motility facilitated by cycles of extension, adhesion, and retraction of T4P fibers. Plays an essential role in the outer membrane localization and assembly of PilQ into secretins which are dodecamers of PilQ. The protein is Type IV pilus assembly protein PilF (pilF) of Pseudomonas aeruginosa (strain ATCC 15692 / DSM 22644 / CIP 104116 / JCM 14847 / LMG 12228 / 1C / PRS 101 / PAO1).